The chain runs to 338 residues: RNA 3'-terminal phosphate cyclase (338 aa).

Residues Q103 and 283 to 287 (YLADQ) contribute to the ATP site. Residue H308 is the Tele-AMP-histidine intermediate of the active site.

The protein belongs to the RNA 3'-terminal cyclase family. Type 1 subfamily.

The protein resides in the cytoplasm. The enzyme catalyses a 3'-end 3'-phospho-ribonucleotide-RNA + ATP = a 3'-end 2',3'-cyclophospho-ribonucleotide-RNA + AMP + diphosphate. Catalyzes the conversion of 3'-phosphate to a 2',3'-cyclic phosphodiester at the end of RNA. The mechanism of action of the enzyme occurs in 3 steps: (A) adenylation of the enzyme by ATP; (B) transfer of adenylate to an RNA-N3'P to produce RNA-N3'PP5'A; (C) and attack of the adjacent 2'-hydroxyl on the 3'-phosphorus in the diester linkage to produce the cyclic end product. The biological role of this enzyme is unknown but it is likely to function in some aspects of cellular RNA processing. This chain is RNA 3'-terminal phosphate cyclase, found in Escherichia coli O139:H28 (strain E24377A / ETEC).